Reading from the N-terminus, the 259-residue chain is AA9 family lytic polysaccharide monooxygenase E (259 aa).

Residues 1-20 form the signal peptide; the sequence is MKATVLAGLAAVIAAQGVAG. Residues His-21 and His-99 each contribute to the Cu(2+) site. A disulfide bridge connects residues Cys-69 and Cys-193. O2 contacts are provided by His-179 and Gln-188. Tyr-190 contacts Cu(2+).

This sequence belongs to the polysaccharide monooxygenase AA9 family. Cu(2+) serves as cofactor.

The protein resides in the secreted. It carries out the reaction [(1-&gt;4)-beta-D-glucosyl]n+m + reduced acceptor + O2 = 4-dehydro-beta-D-glucosyl-[(1-&gt;4)-beta-D-glucosyl]n-1 + [(1-&gt;4)-beta-D-glucosyl]m + acceptor + H2O.. Functionally, lytic polysaccharide monooxygenase (LPMO) that depolymerizes crystalline and amorphous polysaccharides via the oxidation of scissile alpha- or beta-(1-4)-glycosidic bonds, yielding C1 or C4 oxidation products. Catalysis by LPMOs requires the reduction of the active-site copper from Cu(II) to Cu(I) by a reducing agent and H(2)O(2) or O(2) as a cosubstrate. The sequence is that of AA9 family lytic polysaccharide monooxygenase E from Malbranchea cinnamomea (Thermophilic fungus).